A 507-amino-acid chain; its full sequence is Probable Xaa-Pro aminopeptidase ARB_01886 (507 aa).

Mn(2+) contacts are provided by Asp275, Asp286, Glu434, and Glu478.

Belongs to the peptidase M24B family. Mn(2+) is required as a cofactor.

The enzyme catalyses Release of any N-terminal amino acid, including proline, that is linked to proline, even from a dipeptide or tripeptide.. Its function is as follows. Catalyzes the removal of a penultimate prolyl residue from the N-termini of peptides. This chain is Probable Xaa-Pro aminopeptidase ARB_01886, found in Arthroderma benhamiae (strain ATCC MYA-4681 / CBS 112371) (Trichophyton mentagrophytes).